We begin with the raw amino-acid sequence, 460 residues long: Argininosuccinate lyase (460 aa).

The protein belongs to the lyase 1 family. Argininosuccinate lyase subfamily.

Its subcellular location is the cytoplasm. The catalysed reaction is 2-(N(omega)-L-arginino)succinate = fumarate + L-arginine. It participates in amino-acid biosynthesis; L-arginine biosynthesis; L-arginine from L-ornithine and carbamoyl phosphate: step 3/3. This is Argininosuccinate lyase from Rhodopirellula baltica (strain DSM 10527 / NCIMB 13988 / SH1).